A 150-amino-acid chain; its full sequence is Large ribosomal subunit protein uL22c (150 aa).

Belongs to the universal ribosomal protein uL22 family. Part of the 50S ribosomal subunit.

The protein localises to the plastid. Its subcellular location is the chloroplast. In terms of biological role, this protein binds specifically to 23S rRNA. Functionally, the globular domain of the protein is located near the polypeptide exit tunnel on the outside of the subunit, while an extended beta-hairpin is found that lines the wall of the exit tunnel in the center of the 70S ribosome. The polypeptide is Large ribosomal subunit protein uL22c (rpl22) (Fagopyrum esculentum subsp. ancestrale (Wild buckwheat)).